A 240-amino-acid chain; its full sequence is Leucyl/phenylalanyl-tRNA--protein transferase (240 aa).

The protein belongs to the L/F-transferase family.

The protein localises to the cytoplasm. The enzyme catalyses N-terminal L-lysyl-[protein] + L-leucyl-tRNA(Leu) = N-terminal L-leucyl-L-lysyl-[protein] + tRNA(Leu) + H(+). It catalyses the reaction N-terminal L-arginyl-[protein] + L-leucyl-tRNA(Leu) = N-terminal L-leucyl-L-arginyl-[protein] + tRNA(Leu) + H(+). The catalysed reaction is L-phenylalanyl-tRNA(Phe) + an N-terminal L-alpha-aminoacyl-[protein] = an N-terminal L-phenylalanyl-L-alpha-aminoacyl-[protein] + tRNA(Phe). Its function is as follows. Functions in the N-end rule pathway of protein degradation where it conjugates Leu, Phe and, less efficiently, Met from aminoacyl-tRNAs to the N-termini of proteins containing an N-terminal arginine or lysine. The sequence is that of Leucyl/phenylalanyl-tRNA--protein transferase from Maridesulfovibrio salexigens (strain ATCC 14822 / DSM 2638 / NCIMB 8403 / VKM B-1763) (Desulfovibrio salexigens).